The following is a 270-amino-acid chain: MTTKVRVAVVGASGRMGRVLIEAAKHQDVITLGAAIERQGSTLIGADAGELAGVGCVNVAICDSLDNVKDDFDVLIDFTSPDASMLHLEWCLRHKKPMVIGTTGFNHAQKEQISACAEQIPVVFSPNMSVGVNLMWKLLEVATAVMGQDTDIEIIEAHHRHKKDAPSGTALKMGEIIANTLGRDLEECAVYGREGITGARDRNTIGFSTIRAGDIVGEHTAMFADIGERIEITHKASSRMTYANGAMRAAFWLYDQNAGLYDMQQVLGLS.

NAD(+)-binding positions include Gly-11–Met-16 and Glu-37. Arg-38 is a binding site for NADP(+). Residues Gly-101–Thr-103 and Ser-125–Met-128 contribute to the NAD(+) site. The active-site Proton donor/acceptor is His-158. His-159 serves as a coordination point for (S)-2,3,4,5-tetrahydrodipicolinate. Lys-162 acts as the Proton donor in catalysis. Gly-168–Thr-169 lines the (S)-2,3,4,5-tetrahydrodipicolinate pocket.

This sequence belongs to the DapB family.

The protein resides in the cytoplasm. It catalyses the reaction (S)-2,3,4,5-tetrahydrodipicolinate + NAD(+) + H2O = (2S,4S)-4-hydroxy-2,3,4,5-tetrahydrodipicolinate + NADH + H(+). The enzyme catalyses (S)-2,3,4,5-tetrahydrodipicolinate + NADP(+) + H2O = (2S,4S)-4-hydroxy-2,3,4,5-tetrahydrodipicolinate + NADPH + H(+). Its pathway is amino-acid biosynthesis; L-lysine biosynthesis via DAP pathway; (S)-tetrahydrodipicolinate from L-aspartate: step 4/4. In terms of biological role, catalyzes the conversion of 4-hydroxy-tetrahydrodipicolinate (HTPA) to tetrahydrodipicolinate. This chain is 4-hydroxy-tetrahydrodipicolinate reductase, found in Shewanella denitrificans (strain OS217 / ATCC BAA-1090 / DSM 15013).